The sequence spans 1335 residues: Bifunctional autolysin (1335 aa).

A signal peptide spans 1 to 29 (MAKKFNYKLPSMVALTLFGTAFTAHQANA). Disordered regions lie at residues 51–88 (QAEK…QSTT), 100–262 (NEIS…KYKE), and 514–535 (WGTT…NNKL). 5 stretches are compositionally biased toward polar residues: residues 58-88 (EVTQ…QSTT), 100-127 (NEIS…VTKN), 143-155 (TDTN…QSVA), 176-223 (TASQ…NASG), and 244-258 (SLNN…TTSY). Residues 303–863 (VSSQKTSSLP…LSTQSTPAPK (561 aa)) form an N-acetylmuramoyl-L-alanine amidase region. Residues 515 to 531 (GTTSTKPSQPSKPSGGT) show a composition bias toward low complexity. GW domains are found at residues 533–610 (NKLT…YNTA), 612–686 (APVK…TASK), 700–774 (TVTN…YNTA), 776–850 (SPVK…APSK), 868–943 (STQT…TQNI), 945–1020 (KQTQ…QNST), and 1023–1096 (QSTP…KEKI). Positions 864–1335 (QVKPSTQTVN…GKYFEIPTYK (472 aa)) are endo-beta-N-acetylglucosaminidase.

The protein in the N-terminal section; belongs to the N-acetylmuramoyl-L-alanine amidase 2 family. This sequence in the C-terminal section; belongs to the glycosyl hydrolase 73 family. Oligomer; forms a ring structure at the cell surface which is important for efficient partitioning of daughter cells after cell division. Post-translationally, undergoes proteolytic processing to generate the two extracellular lytic enzymes, probably at the septal region on the cell surface.

It localises to the secreted. It catalyses the reaction Hydrolyzes the link between N-acetylmuramoyl residues and L-amino acid residues in certain cell-wall glycopeptides.. The enzyme catalyses an N(4)-(oligosaccharide-(1-&gt;3)-[oligosaccharide-(1-&gt;6)]-beta-D-Man-(1-&gt;4)-beta-D-GlcNAc-(1-&gt;4)-alpha-D-GlcNAc)-L-asparaginyl-[protein] + H2O = an oligosaccharide-(1-&gt;3)-[oligosaccharide-(1-&gt;6)]-beta-D-Man-(1-&gt;4)-D-GlcNAc + N(4)-(N-acetyl-beta-D-glucosaminyl)-L-asparaginyl-[protein]. In terms of biological role, endohydrolysis of the di-N-acetylchitobiosyl unit in high-mannose glycopeptides and glycoproteins containing the -[(Man)5(GlcNAc)2]-Asn structure. One N-acetyl-D-glucosamine residue remains attached to the protein; the rest of the oligosaccharide is released intact. Cleaves the peptidoglycan connecting the daughter cells at the end of the cell division cycle, resulting in the separation of the two newly divided cells. Acts as an autolysin in penicillin-induced lysis. As a bacterial surface-associated protein, mediates attachment to polystyrene surfaces, contributing to biofilm formation. Also has vitronectin-binding activity. The polypeptide is Bifunctional autolysin (atl) (Staphylococcus epidermidis).